Consider the following 178-residue polypeptide: Nucleoside-triphosphatase THEP1 (178 aa).

ATP is bound by residues 9–16 (GPVGSIKA) and 101–108 (VIIIDEVG).

Belongs to the THEP1 NTPase family.

The enzyme catalyses a ribonucleoside 5'-triphosphate + H2O = a ribonucleoside 5'-diphosphate + phosphate + H(+). In terms of biological role, has nucleotide phosphatase activity towards ATP, GTP, CTP, TTP and UTP. May hydrolyze nucleoside diphosphates with lower efficiency. The chain is Nucleoside-triphosphatase THEP1 from Thermoplasma volcanium (strain ATCC 51530 / DSM 4299 / JCM 9571 / NBRC 15438 / GSS1).